We begin with the raw amino-acid sequence, 37 residues long: Photosystem I reaction center subunit VIII (37 aa).

The chain crosses the membrane as a helical span at residues 9–29 (SIFVPLVGLVFPAIAMASLFL).

The protein belongs to the PsaI family.

It localises to the plastid. The protein resides in the chloroplast thylakoid membrane. Functionally, may help in the organization of the PsaL subunit. In Cucumis sativus (Cucumber), this protein is Photosystem I reaction center subunit VIII.